The chain runs to 462 residues: L-seryl-tRNA(Sec) selenium transferase (462 aa).

The residue at position 293 (Lys-293) is an N6-(pyridoxal phosphate)lysine.

It belongs to the SelA family. It depends on pyridoxal 5'-phosphate as a cofactor.

It is found in the cytoplasm. The catalysed reaction is L-seryl-tRNA(Sec) + selenophosphate + H(+) = L-selenocysteinyl-tRNA(Sec) + phosphate. Its pathway is aminoacyl-tRNA biosynthesis; selenocysteinyl-tRNA(Sec) biosynthesis; selenocysteinyl-tRNA(Sec) from L-seryl-tRNA(Sec) (bacterial route): step 1/1. Its function is as follows. Converts seryl-tRNA(Sec) to selenocysteinyl-tRNA(Sec) required for selenoprotein biosynthesis. In Clostridium botulinum (strain ATCC 19397 / Type A), this protein is L-seryl-tRNA(Sec) selenium transferase.